A 496-amino-acid chain; its full sequence is Membrane-bound lytic murein transglycosylase F (496 aa).

An N-terminal signal peptide occupies residues 1–29 (MFFRPDFRPRCAKWLIATGLFLMLGACVE). The interval 30-267 (KPTTLERVKE…RLKDRYYGHV (238 aa)) is non-LT domain. The interval 268-496 (DVLGYVGAYT…SGSSPDKPAL (229 aa)) is LT domain. Glutamate 314 is an active-site residue. Positions 464-496 (VADGNLHVPGVDKTQPPAPPAPASGSSPDKPAL) are disordered. Low complexity predominate over residues 486–496 (ASGSSPDKPAL).

In the N-terminal section; belongs to the bacterial solute-binding protein 3 family. This sequence in the C-terminal section; belongs to the transglycosylase Slt family.

It is found in the cell outer membrane. It catalyses the reaction Exolytic cleavage of the (1-&gt;4)-beta-glycosidic linkage between N-acetylmuramic acid (MurNAc) and N-acetylglucosamine (GlcNAc) residues in peptidoglycan, from either the reducing or the non-reducing ends of the peptidoglycan chains, with concomitant formation of a 1,6-anhydrobond in the MurNAc residue.. Murein-degrading enzyme that degrades murein glycan strands and insoluble, high-molecular weight murein sacculi, with the concomitant formation of a 1,6-anhydromuramoyl product. Lytic transglycosylases (LTs) play an integral role in the metabolism of the peptidoglycan (PG) sacculus. Their lytic action creates space within the PG sacculus to allow for its expansion as well as for the insertion of various structures such as secretion systems and flagella. This chain is Membrane-bound lytic murein transglycosylase F, found in Pseudomonas savastanoi pv. phaseolicola (strain 1448A / Race 6) (Pseudomonas syringae pv. phaseolicola (strain 1448A / Race 6)).